Here is a 389-residue protein sequence, read N- to C-terminus: NADH-quinone oxidoreductase subunit D (389 aa).

Belongs to the complex I 49 kDa subunit family. As to quaternary structure, NDH-1 is composed of 14 different subunits. Subunits NuoB, C, D, E, F, and G constitute the peripheral sector of the complex.

The protein resides in the cell inner membrane. The enzyme catalyses a quinone + NADH + 5 H(+)(in) = a quinol + NAD(+) + 4 H(+)(out). In terms of biological role, NDH-1 shuttles electrons from NADH, via FMN and iron-sulfur (Fe-S) centers, to quinones in the respiratory chain. The immediate electron acceptor for the enzyme in this species is believed to be ubiquinone. Couples the redox reaction to proton translocation (for every two electrons transferred, four hydrogen ions are translocated across the cytoplasmic membrane), and thus conserves the redox energy in a proton gradient. This chain is NADH-quinone oxidoreductase subunit D, found in Rickettsia prowazekii (strain Madrid E).